The following is a 134-amino-acid chain: Profilin-3 (134 aa).

Cys13 and Cys118 are oxidised to a cystine. The Involved in PIP2 interaction signature appears at 84–100 (AVIRGKKGSGGITIKKT). Thr114 carries the phosphothreonine modification.

The protein belongs to the profilin family. Occurs in many kinds of cells as a complex with monomeric actin in a 1:1 ratio. Post-translationally, phosphorylated by MAP kinases.

It localises to the cytoplasm. Its subcellular location is the cytoskeleton. Functionally, binds to actin and affects the structure of the cytoskeleton. At high concentrations, profilin prevents the polymerization of actin, whereas it enhances it at low concentrations. The sequence is that of Profilin-3 from Olea europaea (Common olive).